The following is a 329-amino-acid chain: GTPase Obg (329 aa).

The 159-residue stretch at 1 to 159 folds into the Obg domain; that stretch reads MQFIDQARIT…WLLHLELKLL (159 aa). One can recognise an OBG-type G domain in the interval 160-328; the sequence is AEVGIIGLPN…LLNKIWSKLE (169 aa). ATP-binding positions include 166-173, 191-195, 213-216, 280-283, and 309-311; these read GLPNAGKS, FTTLI, DIPG, NKKE, and SAI. Mg(2+)-binding residues include Ser-173 and Thr-193.

Belongs to the TRAFAC class OBG-HflX-like GTPase superfamily. OBG GTPase family. Monomer. Mg(2+) serves as cofactor.

It localises to the cytoplasm. In terms of biological role, an essential GTPase which binds GTP, GDP and possibly (p)ppGpp with moderate affinity, with high nucleotide exchange rates and a fairly low GTP hydrolysis rate. Plays a role in control of the cell cycle, stress response, ribosome biogenesis and in those bacteria that undergo differentiation, in morphogenesis control. The protein is GTPase Obg of Prochlorococcus marinus (strain SARG / CCMP1375 / SS120).